The primary structure comprises 208 residues: Uracil phosphoribosyltransferase (208 aa).

5-phospho-alpha-D-ribose 1-diphosphate-binding positions include Arg78, Arg103, and 130–138; that span reads DPMLATGGS. Uracil contacts are provided by residues Ile193 and 198 to 200; that span reads GDA. 5-phospho-alpha-D-ribose 1-diphosphate is bound at residue Asp199.

It belongs to the UPRTase family. Mg(2+) serves as cofactor.

The enzyme catalyses UMP + diphosphate = 5-phospho-alpha-D-ribose 1-diphosphate + uracil. It functions in the pathway pyrimidine metabolism; UMP biosynthesis via salvage pathway; UMP from uracil: step 1/1. With respect to regulation, allosterically activated by GTP. In terms of biological role, catalyzes the conversion of uracil and 5-phospho-alpha-D-ribose 1-diphosphate (PRPP) to UMP and diphosphate. The chain is Uracil phosphoribosyltransferase from Klebsiella pneumoniae subsp. pneumoniae (strain ATCC 700721 / MGH 78578).